The chain runs to 822 residues: Valine--tRNA ligase (822 aa).

The 'HIGH' region signature appears at 41–51 (PNVTGQLHLGH). The 'KMSKS' region motif lies at 511-515 (KMSKS). Position 514 (lysine 514) interacts with ATP. A coiled-coil region spans residues 765-822 (EQKGRELKEIQFLKSEILRAEKILTNKGFLEKAPREKIDLERTKLEKLKEKLAFYEKK).

This sequence belongs to the class-I aminoacyl-tRNA synthetase family. ValS type 1 subfamily. As to quaternary structure, monomer.

The protein localises to the cytoplasm. The enzyme catalyses tRNA(Val) + L-valine + ATP = L-valyl-tRNA(Val) + AMP + diphosphate. Its function is as follows. Catalyzes the attachment of valine to tRNA(Val). As ValRS can inadvertently accommodate and process structurally similar amino acids such as threonine, to avoid such errors, it has a 'posttransfer' editing activity that hydrolyzes mischarged Thr-tRNA(Val) in a tRNA-dependent manner. In Mesomycoplasma hyopneumoniae (strain 232) (Mycoplasma hyopneumoniae), this protein is Valine--tRNA ligase.